A 105-amino-acid polypeptide reads, in one-letter code: Small ribosomal subunit protein uS10 (105 aa).

It belongs to the universal ribosomal protein uS10 family. As to quaternary structure, part of the 30S ribosomal subunit.

Involved in the binding of tRNA to the ribosomes. This Desulfotalea psychrophila (strain LSv54 / DSM 12343) protein is Small ribosomal subunit protein uS10.